The primary structure comprises 333 residues: Casein kinase II subunit alpha-3 (333 aa).

In terms of domain architecture, Protein kinase spans 34–319; it reads YEVVRKVGRG…AREAMDHPYF (286 aa). Residues 40–48 and lysine 63 each bind ATP; that span reads VGRGKYSEV. The Proton acceptor role is filled by aspartate 151.

This sequence belongs to the protein kinase superfamily. Ser/Thr protein kinase family. CK2 subfamily. Heterotetramer of two catalytic alpha subunits and two regulatory beta subunits.

Its subcellular location is the nucleus. It is found in the nucleolus. The protein localises to the cytoplasm. It carries out the reaction L-seryl-[protein] + ATP = O-phospho-L-seryl-[protein] + ADP + H(+). It catalyses the reaction L-threonyl-[protein] + ATP = O-phospho-L-threonyl-[protein] + ADP + H(+). Functionally, casein kinases are operationally defined by their preferential utilization of acidic proteins such as caseins as substrates. The alpha chain contains the catalytic site. The tetrameric holoenzyme CK2 is composed of two alpha and two beta subunits. Acts as a circadian clock component that maintains the correct period length through phosphorylation of CCA1. The sequence is that of Casein kinase II subunit alpha-3 from Arabidopsis thaliana (Mouse-ear cress).